A 276-amino-acid chain; its full sequence is Aquaporin-1 (276 aa).

Residues 1 to 10 are Cytoplasmic-facing; it reads MLDAEQKKNY. A helical membrane pass occupies residues 11–31; sequence VAGAFGEFVGTAYFLFMGVGG. Residues 32–46 are Extracellular-facing; it reads AVNFLNNAAGSPLPG. A helical membrane pass occupies residues 47–67; that stretch reads FAIPFCFGFSLFVNVFIWAPI. The Cytoplasmic portion of the chain corresponds to 68 to 93; that stretch reads SGGVFNPSITIALMATNPKDFPWYRG. Residues 73–75 carry the NPA 1 motif; sequence NPS. Residues 94 to 114 traverse the membrane as a helical segment; that stretch reads ILYIVSQFLGALFGSWLIDLI. Residues 115–133 are Extracellular-facing; it reads QPEAPNAATLLADGVSVAQ. The chain crosses the membrane as a helical span at residues 134–154; sequence GLFMEMFATSVLTMAVLILAG. Over 155–159 the chain is Cytoplasmic; that stretch reads ERYGK. A helical transmembrane segment spans residues 160–180; that stretch reads YLAPFGIGMSLFISALCAGPY. Topologically, residues 181–204 are extracellular; that stretch reads TGASLNPARTLGPAIVANQYGRAH. The short motif at 186-188 is the NPA 2 element; sequence NPA. Residues 205-225 traverse the membrane as a helical segment; the sequence is WIYYVGPTLGSLLAAGYWHIL. The Cytoplasmic segment spans residues 226 to 276; it reads RILNIDVVDLKNVLNKCKKCGKEDPRISLKHCEECLKDDPKPEKYDIESQN.

This sequence belongs to the MIP/aquaporin (TC 1.A.8) family.

It is found in the cell membrane. It catalyses the reaction H2O(in) = H2O(out). With respect to regulation, polyethylene glycol (PEG) stimulates whereas glycerol inhibits the aquaporin activity. Water channel required to facilitate the transport of water across membranes. Stimulates plant drought tolerance by facilitating the transport of water from the arbuscular mycorrhiza fungus to host plants. This Rhizophagus irregularis (Arbuscular mycorrhizal fungus) protein is Aquaporin-1.